The primary structure comprises 313 residues: 2-oxoglutarate-dependent dioxygenase eupC (313 aa).

The 98-residue stretch at 187 to 284 (PSIPMRFLHY…LNAKALDGSG (98 aa)) folds into the Fe2OG dioxygenase domain. Fe cation contacts are provided by His212, Asp214, and His263. Lys274 serves as a coordination point for 2-oxoglutarate.

It belongs to the iron/ascorbate-dependent oxidoreductase family. Requires Fe(2+) as cofactor.

It participates in secondary metabolite biosynthesis; terpenoid biosynthesis. Functionally, 2-oxoglutarate-dependent dioxygenase; part of the gene cluster that mediates the biosynthesis of eupenifeldin, a bistropolone meroterpenoid that acts as an antitumor agent. The first step of eupenifeldin biosynthesis is the biosynthesis of 3-methylorcinaldehyde performed by the non-reducing polyketide synthase eupA. Oxidative dearomatization of 3-methylorcinaldehyde likely catalyzed by the FAD-dependent monooxygenase eupB is followed by oxidative ring expansion by the 2-oxoglutarate-dependent dioxygenase eupC to provide the first tropolone metabolite, tropolone stipitaldehyde. In parallel, generation of sesquiterpene alpha-humulene from farnesylpyrophosphate (FPP) is catalyzed by the terpene cyclase eupE. The cytochrome P450 monooxygenase eupD then hydroxylates humulene to humulenol. The putative Diels-Alderase eupF probably catalyzes the formation of the tropolone-humulene skeleton by linking humulenol and the polyketide moiety. The short-chain dehydrogenase/reductase eupG and the flavin-dependent monooxygenase eupH are also essential for eupenifeldin biosynthesis and are likely the additional decorating enzymes of the tropolone-humulene skeleton to produce final eupenifeldin or derivatives. This chain is 2-oxoglutarate-dependent dioxygenase eupC, found in Phoma sp.